Reading from the N-terminus, the 361-residue chain is Phospho-N-acetylmuramoyl-pentapeptide-transferase (361 aa).

Transmembrane regions (helical) follow at residues 25 to 45 (RGILAALTALFLSLWMGPAVI), 73 to 93 (TMGGSLILLTVTLSVLLWGDL), 98 to 118 (VWLVLAVMICFGAIGWYDDWI), 139 to 159 (IFGLAAGLFLYYTADVPAAIT), 168 to 188 (IALPLAGVSFVVIAYFWIVGF), 200 to 220 (GLAIMPTVLVACALGVFAYAS), 237 to 257 (AGELIIICSAIAGAGLGFLWF), 264 to 284 (VFMGDIGALSLGAVLGTIAVI), 290 to 310 (VLVIMGGVFVIETLSVMIQVV), and 339 to 359 (VIVRFWIISVVLVLIGLATLK).

It belongs to the glycosyltransferase 4 family. MraY subfamily. Mg(2+) is required as a cofactor.

The protein resides in the cell inner membrane. It carries out the reaction UDP-N-acetyl-alpha-D-muramoyl-L-alanyl-gamma-D-glutamyl-meso-2,6-diaminopimeloyl-D-alanyl-D-alanine + di-trans,octa-cis-undecaprenyl phosphate = di-trans,octa-cis-undecaprenyl diphospho-N-acetyl-alpha-D-muramoyl-L-alanyl-D-glutamyl-meso-2,6-diaminopimeloyl-D-alanyl-D-alanine + UMP. It participates in cell wall biogenesis; peptidoglycan biosynthesis. Its function is as follows. Catalyzes the initial step of the lipid cycle reactions in the biosynthesis of the cell wall peptidoglycan: transfers peptidoglycan precursor phospho-MurNAc-pentapeptide from UDP-MurNAc-pentapeptide onto the lipid carrier undecaprenyl phosphate, yielding undecaprenyl-pyrophosphoryl-MurNAc-pentapeptide, known as lipid I. This chain is Phospho-N-acetylmuramoyl-pentapeptide-transferase, found in Xanthomonas euvesicatoria pv. vesicatoria (strain 85-10) (Xanthomonas campestris pv. vesicatoria).